Consider the following 79-residue polypeptide: Conotoxin Vi6.4 (79 aa).

An N-terminal signal peptide occupies residues 1–22 (MKLTCVLIITVLFLTASQLITA). A propeptide spanning residues 23-47 (DYSGDKRQYRAVRLRDEMRNFKGAR) is cleaved from the precursor. 3 disulfide bridges follow: cysteine 49-cysteine 62, cysteine 56-cysteine 67, and cysteine 61-cysteine 77. A 4-hydroxyproline mark is found at proline 60 and proline 63.

This sequence belongs to the conotoxin O1 superfamily. In terms of tissue distribution, expressed by the venom duct.

Its subcellular location is the secreted. Ion channel inhibitor that inhibits the increase in intracellular calcium upon depolarization in DRG neurons. In vivo, both intraperitoneal and intracranial injections into mice induce hyperactivity. In Conus virgo (Virgin cone), this protein is Conotoxin Vi6.4.